We begin with the raw amino-acid sequence, 351 residues long: sn-1 oleoyl-lipid 12-desaturase (351 aa).

The next 2 helical transmembrane spans lie at 46–66 (WASVLITLGAIAVGYLGIIYL) and 68–88 (WYCLPITWIWTGTALTGAFVV). The short motif at 90-94 (HDCGH) is the Histidine box-1 element. A helical membrane pass occupies residues 102 to 122 (WVNDLVGHIAFAPLIYPFHSW). Residues 126 to 130 (HDHHH) carry the Histidine box-2 motif. 2 helical membrane-spanning segments follow: residues 199–219 (IAVVFLFAAIAFPALIITTGV) and 222–242 (FVKFWLMPWLVYHFWMSTFTI). A Histidine box-3 motif is present at residues 290–294 (HHLSV).

The protein belongs to the fatty acid desaturase type 2 family. Requires Fe(2+) as cofactor.

The protein localises to the membrane. It catalyses the reaction a 1-[(9Z)-octadecenoyl]-2-acyl-glycerolipid + 2 reduced [2Fe-2S]-[ferredoxin] + O2 + 2 H(+) = a 1-[(9Z,12Z)-octadecdienoyl]-2-acyl-glycerolipid + 2 oxidized [2Fe-2S]-[ferredoxin] + 2 H2O. Its pathway is lipid metabolism; polyunsaturated fatty acid biosynthesis. Its function is as follows. Desaturase involved in fatty acid biosynthesis. Introduces a double bond at carbon 12 of oleoyl groups (18:1) attached to the sn-1 position of the glycerol moiety of membrane glycerolipids. This enzyme is involved in chilling tolerance because the phase transition temperature of lipids of cellular membranes depends on the degree of unsaturation of fatty acids of the membrane lipids. This is sn-1 oleoyl-lipid 12-desaturase from Synechocystis sp. (strain ATCC 27184 / PCC 6803 / Kazusa).